The chain runs to 299 residues: Coenzyme PQQ synthesis protein B (299 aa).

This sequence belongs to the PqqB family.

Its pathway is cofactor biosynthesis; pyrroloquinoline quinone biosynthesis. In terms of biological role, may be involved in the transport of PQQ or its precursor to the periplasm. This chain is Coenzyme PQQ synthesis protein B, found in Methylobacterium nodulans (strain LMG 21967 / CNCM I-2342 / ORS 2060).